A 378-amino-acid chain; its full sequence is Deoxyguanosinetriphosphate triphosphohydrolase-like protein (378 aa).

A disordered region spans residues 1–28 (MLAPFACQPGESRGRQKPESMSTFRSPF). In terms of domain architecture, HD spans 62 to 198 (RLTHSIEVAQ…AAIADDVAYS (137 aa)).

This sequence belongs to the dGTPase family. Type 2 subfamily.

This chain is Deoxyguanosinetriphosphate triphosphohydrolase-like protein, found in Cereibacter sphaeroides (strain ATCC 17029 / ATH 2.4.9) (Rhodobacter sphaeroides).